We begin with the raw amino-acid sequence, 74 residues long: Defensin (74 aa).

The signal sequence occupies residues 1-22; that stretch reads MRGLCICLVFLLVCGLVSATAA. The propeptide occupies 23–36; that stretch reads APAESEVAHLRVRR. Intrachain disulfides connect Cys-40–Cys-61, Cys-47–Cys-69, and Cys-51–Cys-71.

As to expression, hemolymph.

It is found in the secreted. In terms of biological role, antibacterial activity against Gram-positive and Gram-negative bacteria. The chain is Defensin (VSNA1) from Dermacentor variabilis (American dog tick).